The chain runs to 174 residues: Ferritin, heavy subunit (174 aa).

The region spanning 7–156 (QNFHKDCEAA…DWVTNLRRLG (150 aa)) is the Ferritin-like diiron domain. Fe cation-binding residues include Glu-24, Glu-59, His-62, Glu-104, and Gln-138.

The protein belongs to the ferritin family. In terms of assembly, in liver, forms a heteromer consisting of middle and heavy subunits. The functional molecule forms a roughly spherical shell with a diameter of 12 nm and contains a central cavity into which the insoluble mineral iron core is deposited. Liver (at protein level).

It catalyses the reaction 4 Fe(2+) + O2 + 4 H(+) = 4 Fe(3+) + 2 H2O. Functionally, stores iron in a soluble, non-toxic, readily available form. Important for iron homeostasis. Has ferroxidase activity. Iron is taken up in the ferrous form and deposited as ferric hydroxides after oxidation. Also plays a role in delivery of iron to cells. Mediates iron uptake in capsule cells of the developing kidney. Delivery to lysosomes is mediated by the cargo receptor NCOA4 for autophagic degradation and release of iron. In Trematomus newnesi (Dusky notothen), this protein is Ferritin, heavy subunit.